A 149-amino-acid polypeptide reads, in one-letter code: Calmodulin (149 aa).

At alanine 2 the chain carries N-acetylalanine. EF-hand domains lie at 8–43 (DQISEFKEAFSLFDKDGDGCITTKELGTVMRSLGQN), 44–79 (PTEAELQDMINEVDADGNGTIDFPEPLNLMARKMKD), 81–116 (DSEEELKEAFRVFDKDQNGFISAAELRHVMTNLGEK), and 117–149 (LTDEEVDEMIREADVDGDGQINYEEFVKVMMAK). Residues aspartate 21, aspartate 23, aspartate 25, cysteine 27, glutamate 32, aspartate 57, aspartate 59, asparagine 61, threonine 63, glutamate 68, aspartate 94, aspartate 96, asparagine 98, and glutamate 105 each coordinate Ca(2+). Lysine 116 is subject to N6,N6,N6-trimethyllysine. Aspartate 130, aspartate 132, aspartate 134, glutamine 136, and glutamate 141 together coordinate Ca(2+).

This sequence belongs to the calmodulin family.

In terms of biological role, calmodulin mediates the control of a large number of enzymes, ion channels and other proteins by Ca(2+). Among the enzymes to be stimulated by the calmodulin-Ca(2+) complex are a number of protein kinases and phosphatases. This is Calmodulin (CAM) from Malus domestica (Apple).